The sequence spans 221 residues: Probable GTP-binding protein EngB (221 aa).

Residues 23–211 enclose the EngB-type G domain; that stretch reads PLREVAFAGR…DNLIIKWLFE (189 aa). Positions 38 and 60 each coordinate Mg(2+).

The protein belongs to the TRAFAC class TrmE-Era-EngA-EngB-Septin-like GTPase superfamily. EngB GTPase family. It depends on Mg(2+) as a cofactor.

In terms of biological role, necessary for normal cell division and for the maintenance of normal septation. The polypeptide is Probable GTP-binding protein EngB (Polynucleobacter asymbioticus (strain DSM 18221 / CIP 109841 / QLW-P1DMWA-1) (Polynucleobacter necessarius subsp. asymbioticus)).